The chain runs to 593 residues: ATP-dependent lipid A-core flippase (593 aa).

The next 6 membrane-spanning stretches (helical) occupy residues 33 to 55 (YIFL…YGFG), 67 to 87 (ILML…VGSF), 146 to 166 (AIIT…VMFV), 169 to 189 (WQLS…ISII), 258 to 278 (VIQI…AIFG), and 284 to 304 (GSSW…AAIL). An ABC transmembrane type-1 domain is found at 38-319 (ADASMIYLIN…LTKVNVVIQK (282 aa)). Residues 351-585 (VTIKDLSFAF…GGLYTGSINR (235 aa)) enclose the ABC transporter domain. 383–390 (GKSGSGKT) is an ATP binding site.

It belongs to the ABC transporter superfamily. Lipid exporter (TC 3.A.1.106) family. In terms of assembly, homodimer.

It localises to the cell membrane. It catalyses the reaction ATP + H2O + lipid A-core oligosaccharideSide 1 = ADP + phosphate + lipid A-core oligosaccharideSide 2.. Its function is as follows. Involved in lipopolysaccharide (LPS) biosynthesis. Translocates lipid A-core from the inner to the outer leaflet of the inner membrane. Transmembrane domains (TMD) form a pore in the inner membrane and the ATP-binding domain (NBD) is responsible for energy generation. This chain is ATP-dependent lipid A-core flippase, found in Francisella novicida.